We begin with the raw amino-acid sequence, 467 residues long: MIPATTFHGRQVALFGLGGSGIATAQAIMAGGGEVLAWDDNPESVAKAKAEGIKTGDLRDADWRSIHTLLLAPGVPLTHPHPHWSVELARSAGVEIIGDIELFVRERRMHAAHAPLVAITGTNGKSTTTALTAHVLKAAGRDTQMGGNIGRAVMTLDPPVADRHYVLECSSYQIDLSPTLNPTAGVLLNITPDHLDRHGTMENYAAIKERLVAGSDTAIIGVDDEYCRAVADRLEKAGRKVSRISLTGTLEDGFFADGTQLFRAGQGKAEPLFSLEGIGSLRGRHNAQNALAAAAACLACGLSPAEIQTGFRSFPGLAHRMEQVGKLGHVLFVNDSKATNADASAPALSSFPRIYWIAGGLPKAGGIASLRQYFPRIAKAYLIGEAAPAFAATIGEATNYEISGTIAAAVQHAARDAADDPAGDVVVLLSPACASFDQFRNFEVRGEAFRDAVRALPGIELIGEKRA.

121-127 (GTNGKST) serves as a coordination point for ATP.

Belongs to the MurCDEF family.

It is found in the cytoplasm. The enzyme catalyses UDP-N-acetyl-alpha-D-muramoyl-L-alanine + D-glutamate + ATP = UDP-N-acetyl-alpha-D-muramoyl-L-alanyl-D-glutamate + ADP + phosphate + H(+). It participates in cell wall biogenesis; peptidoglycan biosynthesis. Its function is as follows. Cell wall formation. Catalyzes the addition of glutamate to the nucleotide precursor UDP-N-acetylmuramoyl-L-alanine (UMA). This chain is UDP-N-acetylmuramoylalanine--D-glutamate ligase, found in Chelativorans sp. (strain BNC1).